A 137-amino-acid chain; its full sequence is Nucleoside diphosphate kinase (137 aa).

ATP-binding residues include Lys-9, Phe-57, Arg-85, Thr-91, Arg-102, and Asn-112. Residue His-115 is the Pros-phosphohistidine intermediate of the active site.

The protein belongs to the NDK family. As to quaternary structure, homotetramer. Mg(2+) serves as cofactor.

The protein resides in the cytoplasm. It carries out the reaction a 2'-deoxyribonucleoside 5'-diphosphate + ATP = a 2'-deoxyribonucleoside 5'-triphosphate + ADP. The catalysed reaction is a ribonucleoside 5'-diphosphate + ATP = a ribonucleoside 5'-triphosphate + ADP. Its function is as follows. Major role in the synthesis of nucleoside triphosphates other than ATP. The ATP gamma phosphate is transferred to the NDP beta phosphate via a ping-pong mechanism, using a phosphorylated active-site intermediate. This chain is Nucleoside diphosphate kinase, found in Campylobacter jejuni subsp. jejuni serotype O:23/36 (strain 81-176).